The primary structure comprises 379 residues: Muconate cycloisomerase 1-1 (379 aa).

K169 is a catalytic residue. The Mn(2+) site is built by D198, E224, and D247.

It belongs to the mandelate racemase/muconate lactonizing enzyme family. As to quaternary structure, homooctamer. Requires Mn(2+) as cofactor.

The enzyme catalyses (S)-muconolactone = cis,cis-muconate + H(+). It functions in the pathway aromatic compound metabolism; beta-ketoadipate pathway; 5-oxo-4,5-dihydro-2-furylacetate from catechol: step 2/3. Catalyzes a syn cycloisomerization. This chain is Muconate cycloisomerase 1-1 (catB1), found in Acinetobacter lwoffii.